The sequence spans 150 residues: Large ribosomal subunit protein bL9 (150 aa).

This sequence belongs to the bacterial ribosomal protein bL9 family.

Functionally, binds to the 23S rRNA. This Streptococcus pyogenes serotype M18 (strain MGAS8232) protein is Large ribosomal subunit protein bL9.